We begin with the raw amino-acid sequence, 345 residues long: Mariner Mos1 transposase (345 aa).

Positions 1-112 are DNA-binding; sequence MSSFVPNKEQ…VSNRLREMGK (112 aa). 2 consecutive DNA-binding regions (H-T-H motif) follow at residues 24–55 and 89–110; these read TAAESHRMLVEAFGEQVPTVKKCERWFQRFKS and QKQLAEQLEVSQQAVSNRLREM. The linker stretch occupies residues 113–125; it reads IQKVGRWVPHELN. A catalytic region spans residues 126–345; sequence ERQMERRKNT…CVASDGKYLE (220 aa). 3 residues coordinate Mg(2+): Asp-156, Asp-249, and Asp-284.

Homodimer. The complex has a trans arrangement, with each transposon end recognized by the DNA binding region of one transposase monomer and by the active site of the other monomer. Requires Mg(2+) as cofactor. Mn(2+) serves as cofactor.

The protein localises to the nucleus. Mediates transposition of transposon Mos1 by a 'cut and paste' mechanism. Transposases are sequence-specific nucleases and strand transferases that catalyze transposition through an ordered series of events: sequence-specific binding of transposase to the terminal inverted repeats (IR) present at each end of the transposon, pairing of the transposon IRs in a paired-end complex (PEC), cleavage of one or both DNA strands at each transposon end, capture of target DNA, and strand transfer to insert the transposon at a new site. In Drosophila mauritiana (Fruit fly), this protein is Mariner Mos1 transposase (mariner\T).